The primary structure comprises 160 residues: 3-hydroxyacyl-[acyl-carrier-protein] dehydratase FabZ (160 aa).

The active site involves His-58.

The protein belongs to the thioester dehydratase family. FabZ subfamily.

It is found in the cytoplasm. The catalysed reaction is a (3R)-hydroxyacyl-[ACP] = a (2E)-enoyl-[ACP] + H2O. Functionally, involved in unsaturated fatty acids biosynthesis. Catalyzes the dehydration of short chain beta-hydroxyacyl-ACPs and long chain saturated and unsaturated beta-hydroxyacyl-ACPs. The polypeptide is 3-hydroxyacyl-[acyl-carrier-protein] dehydratase FabZ (Ruegeria sp. (strain TM1040) (Silicibacter sp.)).